Here is a 694-residue protein sequence, read N- to C-terminus: Elongation factor G (694 aa).

Residues 6 to 288 enclose the tr-type G domain; sequence KLYRNIGIAA…GVIEYLPSPT (283 aa). GTP-binding positions include 15–22, 86–90, and 140–143; these read AHVDAGKT, DTPGH, and NKMD.

It belongs to the TRAFAC class translation factor GTPase superfamily. Classic translation factor GTPase family. EF-G/EF-2 subfamily.

The protein localises to the cytoplasm. Functionally, catalyzes the GTP-dependent ribosomal translocation step during translation elongation. During this step, the ribosome changes from the pre-translocational (PRE) to the post-translocational (POST) state as the newly formed A-site-bound peptidyl-tRNA and P-site-bound deacylated tRNA move to the P and E sites, respectively. Catalyzes the coordinated movement of the two tRNA molecules, the mRNA and conformational changes in the ribosome. This chain is Elongation factor G, found in Legionella pneumophila subsp. pneumophila (strain Philadelphia 1 / ATCC 33152 / DSM 7513).